The sequence spans 352 residues: MKFRRMISEIMDFRNLSEDEAYSLMEMIMAGELDDIKIAAILTALAMKGETVDEITGFARAMRDRSPRVRVSGSHEVVDSCGTGGDSFRSYNISTAAAMIAAAAGVRVAKHGNRAVTGSCGGADILEAAGVNIELDAAAAARSLSDVGISFMFAPLFHRATARVAAVRRSLGFKTVFNILGPLTSPAAAGIQLLGVFDPQLVGPVAEVLRNLGTRCAMVVHGFDANLNPALDEISTVGPTLVAFLEDDEIRIDRLMPPDFGVEVGELEHLRAGSTTAENLELFMDVLRGREDTPEQKSRLDIALANAGALIYLAGLADTLPEGTETAKRTVKSGAALELLEEFVSYTRNLQS.

Residues Gly-82, 85–86, Ser-90, 92–95, 110–118, and Gly-122 contribute to the 5-phospho-alpha-D-ribose 1-diphosphate site; these read GD, NIST, and KHGNRAVTG. Gly-82 is a binding site for anthranilate. Mg(2+) is bound at residue Ser-94. Residue Asn-113 participates in anthranilate binding. Residue Arg-168 participates in anthranilate binding. Asp-232 and Glu-233 together coordinate Mg(2+).

The protein belongs to the anthranilate phosphoribosyltransferase family. Homodimer. Mg(2+) serves as cofactor.

The catalysed reaction is N-(5-phospho-beta-D-ribosyl)anthranilate + diphosphate = 5-phospho-alpha-D-ribose 1-diphosphate + anthranilate. It participates in amino-acid biosynthesis; L-tryptophan biosynthesis; L-tryptophan from chorismate: step 2/5. Functionally, catalyzes the transfer of the phosphoribosyl group of 5-phosphorylribose-1-pyrophosphate (PRPP) to anthranilate to yield N-(5'-phosphoribosyl)-anthranilate (PRA). This chain is Anthranilate phosphoribosyltransferase, found in Methanothermobacter thermautotrophicus (strain ATCC 29096 / DSM 1053 / JCM 10044 / NBRC 100330 / Delta H) (Methanobacterium thermoautotrophicum).